Consider the following 331-residue polypeptide: Cytosolic arginine sensor for mTORC1 subunit 1 (331 aa).

Ser14 is subject to Phosphoserine. The region spanning Ala72 to Glu139 is the ACT 1 domain. Residue Ser110–Val111 participates in L-arginine binding. Residues Gly155–His174 are disordered. The span at Asp156–His174 shows a compositional bias: polar residues. Positions Trp262–Arg322 constitute an ACT 2 domain. L-arginine is bound by residues Gly273, Ile279–Val280, and Thr299–Asp303.

It belongs to the GATS family. In terms of assembly, forms homodimers and heterodimers with CASTOR2. Interacts with the GATOR2 complex which is composed of MIOS, SEC13, SEH1L, WDR24 and WDR59; the interaction is negatively regulated by arginine. Interacts with TM4SF5; the interaction is positively regulated by leucine and is negatively regulated by arginine. Post-translationally, phosphorylation at Ser-14 by AKT1, promoting the interaction between CASTOR1 and RNF167. In terms of processing, ubiquitinated by RNF167 via 'Lys-29'-polyubiquitination, leading to its degradation, releasing the GATOR2 complex. Ubiquitination by RNF167 is promoted by phosphorylation at Ser-14 by AKT1.

Its subcellular location is the cytoplasm. The protein resides in the cytosol. In terms of biological role, functions as an intracellular arginine sensor within the amino acid-sensing branch of the TORC1 signaling pathway. As a homodimer or a heterodimer with CASTOR2, binds and inhibits the GATOR subcomplex GATOR2 and thereby mTORC1. Binding of arginine to CASTOR1 allosterically disrupts the interaction of CASTOR1-containing dimers with GATOR2 which can in turn activate mTORC1 and the TORC1 signaling pathway. This Rattus norvegicus (Rat) protein is Cytosolic arginine sensor for mTORC1 subunit 1.